Reading from the N-terminus, the 229-residue chain is Ras-related protein RABA6b (229 aa).

20–27 (GDSAVGKS) is a binding site for GTP. The Effector region signature appears at 42–50 (SKPTIGVDF). Residues 68-72 (DTAGQ), 126-129 (NKSD), and 156-157 (SA) each bind GTP. S-geranylgeranyl cysteine attachment occurs at residues C226 and C227.

Belongs to the small GTPase superfamily. Rab family.

The protein localises to the cell membrane. Its function is as follows. Intracellular vesicle trafficking and protein transport. This Arabidopsis thaliana (Mouse-ear cress) protein is Ras-related protein RABA6b (RABA6B).